The primary structure comprises 724 residues: Solute carrier organic anion transporter family member 4C1 (724 aa).

The Cytoplasmic portion of the chain corresponds to 1–105 (MKSAKGIENL…QCLQRCNTPG (105 aa)). Phosphoserine occurs at positions 15, 16, 24, 26, and 28. The interval 24–71 (SASPSQVEVSALSSDPQRENSQPQELQKPQEPQKSPEPSLPSAPPNVS) is disordered. Positions 25–38 (ASPSQVEVSALSSD) are enriched in polar residues. The span at 44 to 60 (SQPQELQKPQEPQKSPE) shows a compositional bias: low complexity. Residues 106–126 (GFLLHYCLLAVTQGIVVNGLV) form a helical membrane-spanning segment. At 127 to 145 (NISISTIEKRYEMKSSLTG) the chain is on the extracellular side. Residues 146–166 (LISSSYDISFCLLSLFVSFFG) form a helical membrane-spanning segment. Residues 167-172 (ERGHKP) are Cytoplasmic-facing. A helical membrane pass occupies residues 173–197 (RWLAFAAFMIGLGALVFSLPQFFSG). At 198 to 224 (EYKLGSLFEDTCVTTRNSTSCTSSTSS) the chain is on the extracellular side. The helical transmembrane segment at 225–254 (LSNYLYVFILGQLLLGAGGTPLYTLGTAFL) threads the bilayer. Residues 255–274 (DDSVPTHKSSLYIGTGYAMS) are Cytoplasmic-facing. A helical transmembrane segment spans residues 275–295 (ILGPAIGYVLGGQLLTIYVDV). Residues 296–311 (AMGESTDITEDDPRWL) are Extracellular-facing. The chain crosses the membrane as a helical span at residues 312-336 (GAWWIGFLLSWIFAWSLIIPFSCFP). Topologically, residues 337–377 (KHLPGTAEIQAGKTSQAHQSNSNADAKFGKSIKDFPAALKN) are cytoplasmic. Residues 378-399 (LMKNAVFMCLVLSTSSEALITT) traverse the membrane as a helical segment. Residues 400 to 419 (GFATFLPKFIENQFGLTSSF) are Extracellular-facing. The chain crosses the membrane as a helical span at residues 420 to 443 (AATLGGAVLIPGAALGQILGGFLV). Residues 444-447 (SKFK) lie on the Cytoplasmic side of the membrane. A helical membrane pass occupies residues 448 to 471 (MTCKNTMKFALFTSGVALTLSFVF). Topologically, residues 472 to 580 (IYAKCGNEPF…ETHCAKLPIF (109 aa)) are extracellular. In terms of domain architecture, Kazal-like spans 495-549 (GNLIAPCNANCNCLRSYYYPVCGDGVQYFSPCFAGCSNSVAHRKPKVYYNCSCIE). 3 disulfide bridges follow: Cys-501–Cys-530, Cys-507–Cys-526, and Cys-516–Cys-547. Residues 581–603 (LCIFFIVIIFTFMAGTPITVSIL) traverse the membrane as a helical segment. Residues 604 to 612 (RCVNHRQRS) are Cytoplasmic-facing. A helical membrane pass occupies residues 613–638 (LALGIQFMVLRLLGTIPGPIIFGFTI). Topologically, residues 639-672 (DSTCILWDINDCGIKGACRIYDNIKMAHMLVAIS) are extracellular. Residues 673 to 690 (VTCKVITMFFNGFAIFLY) form a helical membrane-spanning segment. Over 691-724 (KPPPSATDLSFHKENAVVTNVLAEQDLNKIVKEG) the chain is Cytoplasmic.

The protein belongs to the organo anion transporter (TC 2.A.60) family.

The protein localises to the basolateral cell membrane. It catalyses the reaction estrone 3-sulfate(out) = estrone 3-sulfate(in). The catalysed reaction is L-thyroxine(out) = L-thyroxine(in). It carries out the reaction 3,3',5-triiodo-L-thyronine(out) = 3,3',5-triiodo-L-thyronine(in). The enzyme catalyses chenodeoxycholate(out) = chenodeoxycholate(in). It catalyses the reaction glycocholate(out) = glycocholate(in). The catalysed reaction is L-homoarginine(in) = L-homoarginine(out). It carries out the reaction L-arginine(in) = L-arginine(out). The enzyme catalyses N(omega),N(omega)-dimethyl-L-arginine(out) = N(omega),N(omega)-dimethyl-L-arginine(in). Functionally, mediates the transport of organic anions such as steroids (estrone 3-sulfate, chenodeoxycholate, glycocholate) and thyroid hormones (3,3',5-triiodo-L-thyronine (T3), L-thyroxine (T4)), in the kidney. Capable of transporting cAMP and pharmacological substances such as digoxin, ouabain and methotrexate. Transport is independent of sodium, chloride ion, and ATP. Transport activity is stimulated by an acidic extracellular environment due to increased substrate affinity to the transporter. The driving force for this transport activity is currently not known. The role of hydrogencarbonate (HCO3(-), bicarbonate) as the probable counteranion that exchanges for organic anions is still not well defined. Functions as an uptake transporter at the apical membrane, suggesting a role in renal reabsorption. Involved in the renal secretion of the uremic toxin ADMA (N(omega),N(omega)-dimethyl-L-arginine or asymmetrical dimethylarginine), which is associated to cardiovascular events and mortality, and the structurally related amino acids L-arginine and L-homoarginine (a cardioprotective biomarker). Can act bidirectionally, suggesting a dual protective role of this transport protein; exporting L-homoarginine after being synthesized in proximal tubule cells, and mediating uptake of ADMA from the blood into proximal tubule cells where it is degraded by the enzyme dimethylarginine dimethylaminohydrolase 1 (DDAH1). May be involved in sperm maturation by enabling directed movement of organic anions and compounds within or between cells. This ion-transporting process is important to maintain the strict epididymal homeostasis necessary for sperm maturation. May have a role in secretory functions since seminal vesicle epithelial cells are assumed to secrete proteins involved in decapacitation by modifying surface proteins to facilitate the acquisition of the ability to fertilize the egg. The sequence is that of Solute carrier organic anion transporter family member 4C1 from Pongo abelii (Sumatran orangutan).